Here is a 146-residue protein sequence, read N- to C-terminus: Protein ADM2 (146 aa).

The N-terminal stretch at 1 to 25 (MAQLLMVTVTFGCISLLYLLPGTLS) is a signal peptide. The propeptide occupies 26-96 (GSLGKGLRPR…HPGPQRHVGS (71 aa)). A disordered region spans residues 29-99 (GKGLRPREPP…PQRHVGSRRP (71 aa)). Cysteine 108 and cysteine 113 form a disulfide bridge. Residue tyrosine 145 is modified to Tyrosine amide.

The protein belongs to the adrenomedullin family. In terms of tissue distribution, expression was restricted to the intermediate and anterior lobes of the pituitary.

It is found in the secreted. In terms of biological role, intermedin/ADM2 is a peptide hormone that plays a role as physiological regulator of gastrointestinal and cardiovascular bioactivities mediated by the CALCRL-RAMPs receptor complexes. Activates the cAMP-dependent pathway through interaction with CALCRL-RAMP3 receptor complex. This Rattus norvegicus (Rat) protein is Protein ADM2.